A 272-amino-acid polypeptide reads, in one-letter code: MARVNEPFEGVIMYRRDYRERDLLVKILTDRRGPLMFFVRGAKRKGFKLASDILPFTYGSYVGILADEGLSYIVSAQETHHLTGIGADLNRNAYATYLLELVDQAFEEGRALGGWYKQVMAALNLINTGRDPQVVVNVLEVQLLNRFGIAPVWDRCVVCGRSDLPLDYSEKMGGMLCLHHFAEDPYRFHLTPKTVAYLRLFATLNLAKVDQVHVDEATKRQLGRTLDKIYDDQLGLRLKSKRFINEMDSWTNRLLTARKNPGTDDEKKPAGS.

Belongs to the RecO family.

Its function is as follows. Involved in DNA repair and RecF pathway recombination. This is DNA repair protein RecO from Limosilactobacillus fermentum (strain NBRC 3956 / LMG 18251) (Lactobacillus fermentum).